Consider the following 394-residue polypeptide: 1-deoxy-D-xylulose 5-phosphate reductoisomerase (394 aa).

8 residues coordinate NADPH: threonine 10, glycine 11, serine 12, isoleucine 13, glycine 38, arginine 39, asparagine 40, and asparagine 123. Lysine 124 serves as a coordination point for 1-deoxy-D-xylulose 5-phosphate. Residue glutamate 125 participates in NADPH binding. Aspartate 149 lines the Mn(2+) pocket. Serine 150, glutamate 151, serine 175, and histidine 198 together coordinate 1-deoxy-D-xylulose 5-phosphate. Glutamate 151 is a Mn(2+) binding site. NADPH is bound at residue glycine 204. 1-deoxy-D-xylulose 5-phosphate-binding residues include serine 211, asparagine 216, lysine 217, and glutamate 220. Glutamate 220 provides a ligand contact to Mn(2+).

Belongs to the DXR family. Mg(2+) serves as cofactor. The cofactor is Mn(2+).

The enzyme catalyses 2-C-methyl-D-erythritol 4-phosphate + NADP(+) = 1-deoxy-D-xylulose 5-phosphate + NADPH + H(+). It participates in isoprenoid biosynthesis; isopentenyl diphosphate biosynthesis via DXP pathway; isopentenyl diphosphate from 1-deoxy-D-xylulose 5-phosphate: step 1/6. Its function is as follows. Catalyzes the NADPH-dependent rearrangement and reduction of 1-deoxy-D-xylulose-5-phosphate (DXP) to 2-C-methyl-D-erythritol 4-phosphate (MEP). In Cereibacter sphaeroides (strain KD131 / KCTC 12085) (Rhodobacter sphaeroides), this protein is 1-deoxy-D-xylulose 5-phosphate reductoisomerase.